A 99-amino-acid polypeptide reads, in one-letter code: Large ribosomal subunit protein eL30 (99 aa).

Belongs to the eukaryotic ribosomal protein eL30 family.

This is Large ribosomal subunit protein eL30 from Methanosarcina acetivorans (strain ATCC 35395 / DSM 2834 / JCM 12185 / C2A).